An 818-amino-acid polypeptide reads, in one-letter code: Protein Cep78 homolog (818 aa).

3 disordered regions span residues 513–589, 691–748, and 768–798; these read LDVE…HEFA, RQAN…TEAT, and KQSE…DQNV. The span at 514–539 shows a compositional bias: acidic residues; the sequence is DVEEEEEEEEEEQQAEESQSESEPQN. Basic and acidic residues predominate over residues 561–589; sequence VRSEIKYVENNPKEAAKKNRESKSDHEFA. Positions 782–792 are enriched in gly residues; that stretch reads GDAGGGGGSGD.

Belongs to the CEP78 family.

It localises to the cytoplasm. It is found in the cytoskeleton. The protein localises to the microtubule organizing center. The protein resides in the centrosome. Its subcellular location is the centriole. It localises to the cilium basal body. In terms of biological role, may play a role in cilium biogenesis. The chain is Protein Cep78 homolog from Drosophila melanogaster (Fruit fly).